A 939-amino-acid polypeptide reads, in one-letter code: Collagen-like protein 3 (939 aa).

N15, N35, N39, and N82 each carry an N-linked (GlcNAc...) asparagine; by host glycan. The segment covering 84-95 (SGSSGPSGPQGP) has biased composition (low complexity). Disordered stretches follow at residues 84–332 (SGSS…DLGN) and 358–697 (SIKG…KGEA). Collagen-like domains lie at 88–147 (GPSG…NGDK), 148–207 (GNKG…KGDK), 211–330 (GNKG…SPDL), 364–423 (GDKG…SGAD), 427–486 (GDKG…KGEK), 493–552 (GESG…KGSK), 564–622 (GDKG…KGDV), and 638–697 (GDKG…KGEA). 13 stretches are compositionally biased toward basic and acidic residues: residues 96–110 (KGEK…DKGE), 123–182 (DADK…DPGI), 189–230 (DADK…DIGL), 237–260 (DADK…DIGP), 267–288 (DADK…KGTK), 297–314 (KGDK…DKGE), 360–371 (KGDKGDKGDTGL), 378–416 (DADK…DTGL), 423–491 (DADK…DVGI), 498–527 (DADK…DTGI), 537–552 (KGDK…KGSK), 560–580 (KGDK…DIGI), and 589–684 (KGDK…DKGD). N-linked (GlcNAc...) asparagine; by host glycosylation is found at N788, N820, N858, N919, and N925. Residues 896 to 923 (NGETGAPTTDSGTNYGAGGGGGGNGTQG) form a disordered region. The segment covering 910–923 (YGAGGGGGGNGTQG) has biased composition (gly residues).

May be hydroxylated on lysine by the viral-encoded procollagen-lysine,2-oxoglutarate 5-dioxygenase.

The protein resides in the virion. In terms of biological role, may participate in the formation of a layer of cross-linked glycosylated fibrils at the viral surface thus giving it a hairy-like appearance. This Acanthamoeba polyphaga (Amoeba) protein is Collagen-like protein 3.